The following is a 215-amino-acid chain: Ribonuclease T (215 aa).

The Exonuclease domain occupies 20–194; it reads VVIDVETAGF…YDTERTAVLF (175 aa). Mg(2+) is bound by residues D23, E25, H181, and D186. H181 functions as the Proton donor/acceptor in the catalytic mechanism.

This sequence belongs to the RNase T family. As to quaternary structure, homodimer. Mg(2+) serves as cofactor.

Trims short 3' overhangs of a variety of RNA species, leaving a one or two nucleotide 3' overhang. Responsible for the end-turnover of tRNA: specifically removes the terminal AMP residue from uncharged tRNA (tRNA-C-C-A). Also appears to be involved in tRNA biosynthesis. This Shigella dysenteriae serotype 1 (strain Sd197) protein is Ribonuclease T.